Consider the following 193-residue polypeptide: Cytidylate kinase (193 aa).

12-20 (GLPGSGTTT) serves as a coordination point for ATP.

The protein belongs to the cytidylate kinase family. Type 2 subfamily.

Its subcellular location is the cytoplasm. The catalysed reaction is CMP + ATP = CDP + ADP. The enzyme catalyses dCMP + ATP = dCDP + ADP. The chain is Cytidylate kinase from Methanopyrus kandleri (strain AV19 / DSM 6324 / JCM 9639 / NBRC 100938).